The primary structure comprises 510 residues: NAD(P)H-quinone oxidoreductase subunit 2 B, chloroplastic (510 aa).

A run of 13 helical transmembrane segments spans residues 24–44, 57–77, 99–119, 124–144, 150–170, 183–203, 229–249, 295–315, 323–343, 347–367, 395–415, 418–438, and 484–504; these read LLLF…GLIL, IPWL…ALLF, IFQF…VEYI, MAIT…MFLC, ITIF…SGYT, YLLM…WLYG, ISIA…PAPF, WHLL…LVAI, MLAY…IVGD, GYAS…GTFA, ALSS…AGFF, LHLF…IGLL, and MIVC…IIAI.

This sequence belongs to the complex I subunit 2 family. NDH is composed of at least 16 different subunits, 5 of which are encoded in the nucleus.

The protein resides in the plastid. It localises to the chloroplast thylakoid membrane. It catalyses the reaction a plastoquinone + NADH + (n+1) H(+)(in) = a plastoquinol + NAD(+) + n H(+)(out). The enzyme catalyses a plastoquinone + NADPH + (n+1) H(+)(in) = a plastoquinol + NADP(+) + n H(+)(out). In terms of biological role, NDH shuttles electrons from NAD(P)H:plastoquinone, via FMN and iron-sulfur (Fe-S) centers, to quinones in the photosynthetic chain and possibly in a chloroplast respiratory chain. The immediate electron acceptor for the enzyme in this species is believed to be plastoquinone. Couples the redox reaction to proton translocation, and thus conserves the redox energy in a proton gradient. The polypeptide is NAD(P)H-quinone oxidoreductase subunit 2 B, chloroplastic (Ceratophyllum demersum (Rigid hornwort)).